The primary structure comprises 1178 residues: Ubiquitin carboxyl-terminal hydrolase cyk-3 (1178 aa).

EF-hand domains are found at residues glutamate 28–isoleucine 60, phenylalanine 175–glycine 210, and proline 211–proline 246. Ca(2+) contacts are provided by aspartate 188, asparagine 190, aspartate 192, glutamine 194, glutamate 199, aspartate 224, aspartate 226, aspartate 228, and glutamate 235. In terms of domain architecture, DUSP spans glutamate 296 to leucine 410. Residues valine 570–lysine 1175 form the USP domain. Cysteine 579 serves as the catalytic Nucleophile. The segment at serine 681–glutamate 725 is disordered. Histidine 1134 acts as the Proton acceptor in catalysis.

It belongs to the peptidase C19 family. In terms of tissue distribution, expressed in excretory cells, coelomocytes, head neurons, hypodermal cells, germ cells, oocytes, sperm and pharynx (at protein level).

It localises to the nucleus. The protein localises to the cytoplasm. Its subcellular location is the cytoskeleton. It is found in the microtubule organizing center. The enzyme catalyses Thiol-dependent hydrolysis of ester, thioester, amide, peptide and isopeptide bonds formed by the C-terminal Gly of ubiquitin (a 76-residue protein attached to proteins as an intracellular targeting signal).. Its function is as follows. Ubiquitin-protein hydrolase which cleaves ubiquitin from ubiquitinated proteins. Plays a role in embryo osmoregulation. Probably by regulating osmosis, controls actin redistribution in the 1-cell embryos and thus actin-dependent processes such as cytokinesis and P-granules segregation. During the first embryonic mitotic division, involved in the formation of a functional microtubule organizing center provided by the male pronucleus. Acts as a positive regulator of the mTORC1 signaling. The sequence is that of Ubiquitin carboxyl-terminal hydrolase cyk-3 from Caenorhabditis elegans.